A 267-amino-acid polypeptide reads, in one-letter code: 4-hydroxy-tetrahydrodipicolinate reductase (267 aa).

Residues 9 to 14 and Asp35 contribute to the NAD(+) site; that span reads GAGGRM. Residue Arg36 participates in NADP(+) binding. NAD(+)-binding positions include 99 to 101 and 123 to 126; these read GTT and AANY. Residue His156 is the Proton donor/acceptor of the active site. Position 157 (His157) interacts with (S)-2,3,4,5-tetrahydrodipicolinate. Lys160 acts as the Proton donor in catalysis. 166 to 167 contributes to the (S)-2,3,4,5-tetrahydrodipicolinate binding site; sequence GT.

Belongs to the DapB family.

It localises to the cytoplasm. The catalysed reaction is (S)-2,3,4,5-tetrahydrodipicolinate + NAD(+) + H2O = (2S,4S)-4-hydroxy-2,3,4,5-tetrahydrodipicolinate + NADH + H(+). It carries out the reaction (S)-2,3,4,5-tetrahydrodipicolinate + NADP(+) + H2O = (2S,4S)-4-hydroxy-2,3,4,5-tetrahydrodipicolinate + NADPH + H(+). It participates in amino-acid biosynthesis; L-lysine biosynthesis via DAP pathway; (S)-tetrahydrodipicolinate from L-aspartate: step 4/4. Catalyzes the conversion of 4-hydroxy-tetrahydrodipicolinate (HTPA) to tetrahydrodipicolinate. This is 4-hydroxy-tetrahydrodipicolinate reductase from Halorhodospira halophila (strain DSM 244 / SL1) (Ectothiorhodospira halophila (strain DSM 244 / SL1)).